A 393-amino-acid polypeptide reads, in one-letter code: MSFLANEASSESIASFSKPEIMSSFLPEGGCYELLSVIGKGFEDLMTVNSRYKPTGEYVTVRRINLEACSNEMVTFLQGELHVSKLFSHPNIVPYRATFIADNELWAVTSFMAYGSAKDLIGTHFMDGMSELAIAYILQGVLKALDYIHHMGYVHRSVKASHILISTDGKVYLSGLRSNLSMISHGQRQRAVHDFPKYSIKVLPWLSPEVLQQNLQGYDAKSDIYSVGITACELANGHVPFKDMPATQMLLEKLNGTVPCLLDTSTIPAEELTMSPSRSIANPGLNDSLAAGSLRPANGDSPSHPYHRTFSPHFHNFVEQCLQRNPDARPNASTLLNHSFFKQIKRRASEALPELLRPVTPITSFEGSQSQDHSGILGLVTNLEDLEVDDWEF.

Phosphoserine is present on residues S2 and S9. The 310-residue stretch at 32–341 (YELLSVIGKG…ASTLLNHSFF (310 aa)) folds into the Protein kinase domain. T381 is modified (phosphothreonine; by LKB1).

This sequence belongs to the protein kinase superfamily. STE Ser/Thr protein kinase family. STE20 subfamily. In terms of assembly, component of a trimeric complex composed of STK11/LKB1, STRAD (STRADA or STRADB) and CAB39/MO25 (CAB39/MO25alpha or CAB39L/MO25beta): the complex tethers STK11/LKB1 in the cytoplasm and stimulates its catalytic activity. Expressed in liver.

It localises to the nucleus. The protein resides in the cytoplasm. In terms of biological role, pseudokinase which, in complex with CAB39/MO25 (CAB39/MO25alpha or CAB39L/MO25beta), binds to and activates STK11/LKB1. Adopts a closed conformation typical of active protein kinases and binds STK11/LKB1 as a pseudosubstrate, promoting conformational change of STK11/LKB1 in an active conformation. The protein is STE20-related kinase adapter protein alpha (Strada) of Rattus norvegicus (Rat).